We begin with the raw amino-acid sequence, 443 residues long: Tol-Pal system protein TolB (443 aa).

The first 31 residues, 1-31 (MTRLAKGKWRSTLGAMMALAVMVAAIPQARA), serve as a signal peptide directing secretion. The segment covering 423–432 (NERQISTPTE) has biased composition (polar residues). A disordered region spans residues 423–443 (NERQISTPTEASDPAWSPLLP).

The protein belongs to the TolB family. As to quaternary structure, the Tol-Pal system is composed of five core proteins: the inner membrane proteins TolA, TolQ and TolR, the periplasmic protein TolB and the outer membrane protein Pal. They form a network linking the inner and outer membranes and the peptidoglycan layer.

Its subcellular location is the periplasm. In terms of biological role, part of the Tol-Pal system, which plays a role in outer membrane invagination during cell division and is important for maintaining outer membrane integrity. The polypeptide is Tol-Pal system protein TolB (Rhodospirillum rubrum (strain ATCC 11170 / ATH 1.1.1 / DSM 467 / LMG 4362 / NCIMB 8255 / S1)).